A 392-amino-acid polypeptide reads, in one-letter code: uncharacterized protein (392 aa).

Belongs to the mimivirus L17x/L18x family.

This is an uncharacterized protein from Acanthamoeba polyphaga (Amoeba).